The primary structure comprises 428 residues: Serine--tRNA ligase (428 aa).

235–237 (TAE) is an L-serine binding site. Residue 266–268 (RSE) participates in ATP binding. L-serine is bound at residue glutamate 289. ATP is bound at residue 353-356 (EISS). Residue serine 389 coordinates L-serine.

This sequence belongs to the class-II aminoacyl-tRNA synthetase family. Type-1 seryl-tRNA synthetase subfamily. As to quaternary structure, homodimer. The tRNA molecule binds across the dimer.

It is found in the cytoplasm. It carries out the reaction tRNA(Ser) + L-serine + ATP = L-seryl-tRNA(Ser) + AMP + diphosphate + H(+). The enzyme catalyses tRNA(Sec) + L-serine + ATP = L-seryl-tRNA(Sec) + AMP + diphosphate + H(+). The protein operates within aminoacyl-tRNA biosynthesis; selenocysteinyl-tRNA(Sec) biosynthesis; L-seryl-tRNA(Sec) from L-serine and tRNA(Sec): step 1/1. Its function is as follows. Catalyzes the attachment of serine to tRNA(Ser). Is also able to aminoacylate tRNA(Sec) with serine, to form the misacylated tRNA L-seryl-tRNA(Sec), which will be further converted into selenocysteinyl-tRNA(Sec). This chain is Serine--tRNA ligase, found in Shewanella loihica (strain ATCC BAA-1088 / PV-4).